The sequence spans 343 residues: N-acetyl-gamma-glutamyl-phosphate reductase (343 aa).

Cys-146 is an active-site residue.

It belongs to the NAGSA dehydrogenase family. Type 1 subfamily.

The protein localises to the cytoplasm. The catalysed reaction is N-acetyl-L-glutamate 5-semialdehyde + phosphate + NADP(+) = N-acetyl-L-glutamyl 5-phosphate + NADPH + H(+). It participates in amino-acid biosynthesis; L-arginine biosynthesis; N(2)-acetyl-L-ornithine from L-glutamate: step 3/4. Functionally, catalyzes the NADPH-dependent reduction of N-acetyl-5-glutamyl phosphate to yield N-acetyl-L-glutamate 5-semialdehyde. This chain is N-acetyl-gamma-glutamyl-phosphate reductase, found in Acidothermus cellulolyticus (strain ATCC 43068 / DSM 8971 / 11B).